The primary structure comprises 139 residues: Type II methyltransferase M.AquIB (139 aa).

The SAM-dependent MTase C5-type domain occupies 1–135 (MDIKNVHIKN…KAVSEQLLDV (135 aa)). The tract at residues 38–58 (KTFGSTYRRLDPNQPSPTVTR) is disordered.

Belongs to the class I-like SAM-binding methyltransferase superfamily. C5-methyltransferase family. In terms of assembly, heterodimer of an alpha and a beta subunit.

It carries out the reaction a 2'-deoxycytidine in DNA + S-adenosyl-L-methionine = a 5-methyl-2'-deoxycytidine in DNA + S-adenosyl-L-homocysteine + H(+). Functionally, a methylase, recognizes the double-stranded sequence 5'-CYCGRG-3', methylates C-1 on both strands, and protects the DNA from cleavage by the AquI endonuclease. The sequence is that of Type II methyltransferase M.AquIB (aquIMB) from Picosynechococcus sp. (strain ATCC 27264 / PCC 7002 / PR-6) (Agmenellum quadruplicatum).